A 300-amino-acid polypeptide reads, in one-letter code: Porphobilinogen deaminase (300 aa).

S-(dipyrrolylmethanemethyl)cysteine is present on Cys-239.

Belongs to the HMBS family. Monomer. Dipyrromethane is required as a cofactor.

The enzyme catalyses 4 porphobilinogen + H2O = hydroxymethylbilane + 4 NH4(+). The protein operates within porphyrin-containing compound metabolism; protoporphyrin-IX biosynthesis; coproporphyrinogen-III from 5-aminolevulinate: step 2/4. In terms of biological role, tetrapolymerization of the monopyrrole PBG into the hydroxymethylbilane pre-uroporphyrinogen in several discrete steps. This chain is Porphobilinogen deaminase, found in Francisella philomiragia subsp. philomiragia (strain ATCC 25017 / CCUG 19701 / FSC 153 / O#319-036).